We begin with the raw amino-acid sequence, 259 residues long: tRNA pseudouridine synthase A (259 aa).

The active-site Nucleophile is Asp-51. Position 109 (Tyr-109) interacts with substrate.

Belongs to the tRNA pseudouridine synthase TruA family. Homodimer.

The enzyme catalyses uridine(38/39/40) in tRNA = pseudouridine(38/39/40) in tRNA. Functionally, formation of pseudouridine at positions 38, 39 and 40 in the anticodon stem and loop of transfer RNAs. This is tRNA pseudouridine synthase A from Colwellia psychrerythraea (strain 34H / ATCC BAA-681) (Vibrio psychroerythus).